Reading from the N-terminus, the 333-residue chain is GTPase Obg (333 aa).

The Obg domain maps to 1–158 (MFIDSAKIYV…RNIDLELKLL (158 aa)). The segment at 121-143 (HGGKGNQHFATPTNRAPRYSEPA) is disordered. The OBG-type G domain maps to 159-323 (ADIGLVGFPN…LKDVLWRIIQ (165 aa)). Residues 165–172 (GFPNAGKS), 190–194 (FTTLE), 212–215 (DIPG), 279–282 (SKMD), and 304–306 (SSV) contribute to the GTP site. Residues S172 and T192 each coordinate Mg(2+).

This sequence belongs to the TRAFAC class OBG-HflX-like GTPase superfamily. OBG GTPase family. As to quaternary structure, monomer. It depends on Mg(2+) as a cofactor.

Its subcellular location is the cytoplasm. An essential GTPase which binds GTP, GDP and possibly (p)ppGpp with moderate affinity, with high nucleotide exchange rates and a fairly low GTP hydrolysis rate. Plays a role in control of the cell cycle, stress response, ribosome biogenesis and in those bacteria that undergo differentiation, in morphogenesis control. This is GTPase Obg from Chloroherpeton thalassium (strain ATCC 35110 / GB-78).